A 109-amino-acid chain; its full sequence is Antifungal protein ginkbilobin-like protein (109 aa).

In terms of domain architecture, Gnk2-homologous spans 4 to 109 (TNFVSSACNT…CFIQYEQHSF (106 aa)). 3 disulfide bridges follow: C11/C87, C63/C72, and C75/C100. An alpha-D-mannopyranose-binding site is contributed by N12. Alpha-D-mannopyranose is bound by residues R94 and E105.

In terms of biological role, exerts antifungal activity through its carbohydrate-binding specificity. The polypeptide is Antifungal protein ginkbilobin-like protein (Picea abies (Norway spruce)).